Reading from the N-terminus, the 232-residue chain is MLNADQAELDKFGELAHRWWDPNSEFKPLHDINPLRIDWIDQAISLAGKRVLDVGCGGGLLSEGMAVRGANVTGIDLSEKPLGVAKLHLLETGQKVDYRKISVEELAEQMPGEFDAVTCLEMLEHVPNPSSVITACARLVKPGGQVFLSTLNRNPKSYLFAVIGAEYVLQMLPKGTHDYARFIKPSELARWAKMANLEPEELVGMSYNPLTKKYSLGKDTSVNYLMRTIRHV.

S-adenosyl-L-methionine contacts are provided by Arg36, Gly55, Asp76, and Leu120.

The protein belongs to the methyltransferase superfamily. UbiG/COQ3 family.

The catalysed reaction is a 3-demethylubiquinol + S-adenosyl-L-methionine = a ubiquinol + S-adenosyl-L-homocysteine + H(+). It carries out the reaction a 3-(all-trans-polyprenyl)benzene-1,2-diol + S-adenosyl-L-methionine = a 2-methoxy-6-(all-trans-polyprenyl)phenol + S-adenosyl-L-homocysteine + H(+). It functions in the pathway cofactor biosynthesis; ubiquinone biosynthesis. Functionally, O-methyltransferase that catalyzes the 2 O-methylation steps in the ubiquinone biosynthetic pathway. This Dechloromonas aromatica (strain RCB) protein is Ubiquinone biosynthesis O-methyltransferase.